A 202-amino-acid polypeptide reads, in one-letter code: Interleukin-17D (202 aa).

The signal sequence occupies residues 1–15 (MLVAGFLLALPPSWA). The interval 65-85 (QARNASCPAGGRPADRRFRPP) is disordered. 2 N-linked (GlcNAc...) asparagine glycosylation sites follow: Asn-68 and Asn-181.

This sequence belongs to the IL-17 family. Expressed preferentially in adipose, skeletal muscle and CNS.

It localises to the secreted. Functionally, induces expression of IL6, CXCL8/IL8, and CSF2/GM-CSF from endothelial cells. The polypeptide is Interleukin-17D (IL17D) (Homo sapiens (Human)).